Reading from the N-terminus, the 314-residue chain is Oxaloacetate tautomerase FAHD2A, mitochondrial (314 aa).

A mitochondrion-targeting transit peptide spans 1 to 84 (MLGSSGRRLL…ATLSVVRRAL (84 aa)). Mg(2+) is bound by residues E159, E161, and D190.

The protein belongs to the FAH family. The cofactor is Mg(2+). Mn(2+) is required as a cofactor.

Its subcellular location is the mitochondrion. It carries out the reaction oxaloacetate = enol-oxaloacetate. In terms of biological role, tautomerase that converts enol-oxaloacetate, a strong inhibitor of succinate dehydrogenase, to the physiological keto form of oxaloacetate. It is thereby required to maximize aerobic respiration efficiency by preventing succinate dehydrogenase inhibition. This Bos taurus (Bovine) protein is Oxaloacetate tautomerase FAHD2A, mitochondrial.